The sequence spans 209 residues: MKQADELRFNEDGLIPAIVQDAASKEVLTLAYMNKESYEKTLETKETWFYSRSRQALWHKGETSGNTQAVKGIRYDCDQDALLVLVEPSGPACHTGSYSCFTKEQTEEQAADRFGIMNELERVIAERQAEMPEGAYTTYLFREGVDKILKKVGEEASEVIIAAKNRDHEELKWEAADLLYHLLVLLREQSLPLDDVLDVLKKRHSEIEE.

Positions 1 to 116 (MKQADELRFN…EEQAADRFGI (116 aa)) are phosphoribosyl-AMP cyclohydrolase. A phosphoribosyl-ATP pyrophosphohydrolase region spans residues 117-209 (MNELERVIAE…LKKRHSEIEE (93 aa)).

It in the N-terminal section; belongs to the PRA-CH family. The protein in the C-terminal section; belongs to the PRA-PH family.

The protein localises to the cytoplasm. It catalyses the reaction 1-(5-phospho-beta-D-ribosyl)-ATP + H2O = 1-(5-phospho-beta-D-ribosyl)-5'-AMP + diphosphate + H(+). The enzyme catalyses 1-(5-phospho-beta-D-ribosyl)-5'-AMP + H2O = 1-(5-phospho-beta-D-ribosyl)-5-[(5-phospho-beta-D-ribosylamino)methylideneamino]imidazole-4-carboxamide. It participates in amino-acid biosynthesis; L-histidine biosynthesis; L-histidine from 5-phospho-alpha-D-ribose 1-diphosphate: step 2/9. The protein operates within amino-acid biosynthesis; L-histidine biosynthesis; L-histidine from 5-phospho-alpha-D-ribose 1-diphosphate: step 3/9. The sequence is that of Histidine biosynthesis bifunctional protein HisIE (hisI) from Bacillus subtilis (strain 168).